The primary structure comprises 259 residues: Transcription factor bHLH125 (259 aa).

The 53-residue stretch at 73 to 125 folds into the bHLH domain; it reads SKKMKHRDIERQRRQEVSSLFKRLRTLLPFQYIQGKRSTSDHIVQAVNYIKDL.

In terms of assembly, homodimer.

It localises to the nucleus. The chain is Transcription factor bHLH125 (BHLH125) from Arabidopsis thaliana (Mouse-ear cress).